The following is a 20-amino-acid chain: Large ribosomal subunit protein bL31 (20 aa).

Residues X16 and X18 each coordinate Zn(2+).

The protein belongs to the bacterial ribosomal protein bL31 family. Type A subfamily. In terms of assembly, part of the 50S ribosomal subunit. The cofactor is Zn(2+).

Its function is as follows. Binds the 23S rRNA. The protein is Large ribosomal subunit protein bL31 (rpmE) of Ectopseudomonas mendocina (Pseudomonas mendocina).